A 556-amino-acid chain; its full sequence is Arginine--tRNA ligase (556 aa).

The short motif at 132–142 (ANPTGNLHLGH) is the 'HIGH' region element.

It belongs to the class-I aminoacyl-tRNA synthetase family. In terms of assembly, monomer.

The protein localises to the cytoplasm. The enzyme catalyses tRNA(Arg) + L-arginine + ATP = L-arginyl-tRNA(Arg) + AMP + diphosphate. The chain is Arginine--tRNA ligase from Bacillus licheniformis (strain ATCC 14580 / DSM 13 / JCM 2505 / CCUG 7422 / NBRC 12200 / NCIMB 9375 / NCTC 10341 / NRRL NRS-1264 / Gibson 46).